A 707-amino-acid polypeptide reads, in one-letter code: D-(-)-3-hydroxybutyrate oligomer hydrolase (707 aa).

Residues 1–24 form the signal peptide; it reads MHHDNFRRLGNAAFAAAAALLAVA. The active-site Charge relay system is Ser-311.

It belongs to the D-(-)-3-hydroxybutyrate oligomer hydrolase family.

The protein localises to the secreted. The catalysed reaction is (3R)-hydroxybutanoate dimer + H2O = 2 (R)-3-hydroxybutanoate + H(+). It participates in lipid metabolism; butanoate metabolism. In terms of biological role, participates in the degradation of poly-3-hydroxybutyrate (PHB). It works downstream of poly(3-hydroxybutyrate) depolymerase, hydrolyzing D(-)-3-hydroxybutyrate oligomers of various length (3HB-oligomers) into 3HB-monomers. In Cupriavidus pinatubonensis (strain JMP 134 / LMG 1197) (Cupriavidus necator (strain JMP 134)), this protein is D-(-)-3-hydroxybutyrate oligomer hydrolase.